A 497-amino-acid polypeptide reads, in one-letter code: Guanosine-5'-triphosphate,3'-diphosphate pyrophosphatase (497 aa).

The protein belongs to the GppA/Ppx family. GppA subfamily.

The catalysed reaction is guanosine 3'-diphosphate 5'-triphosphate + H2O = guanosine 3',5'-bis(diphosphate) + phosphate + H(+). The protein operates within purine metabolism; ppGpp biosynthesis; ppGpp from GTP: step 2/2. Catalyzes the conversion of pppGpp to ppGpp. Guanosine pentaphosphate (pppGpp) is a cytoplasmic signaling molecule which together with ppGpp controls the 'stringent response', an adaptive process that allows bacteria to respond to amino acid starvation, resulting in the coordinated regulation of numerous cellular activities. The polypeptide is Guanosine-5'-triphosphate,3'-diphosphate pyrophosphatase (Photobacterium profundum (strain SS9)).